A 1742-amino-acid polypeptide reads, in one-letter code: MEGSGTENPCSTTVGWLQQDNDAKPWLWRFSNCFSRPQQTLPLSPQTKDYMENKKVAVELKDVPSPLHAGSKLFPAVPLPDIHSLQQPKVQLSTVPKVSCCAHCTNDPSTSPVRFGGGSGGGAGSLVPPGALLDSQSTRTITCQVGSGLAFQSAPPLQNASARNTLAGVASDFPSMCLESNLSSCKHLPCCGKLHFQSCRGNVHKLHQFPALQGCPSSAGYFPCSDFTSGAPGHVEEHVSQSELTPHLCTNSLHLNVVPPVCLKGSLYCEDCLSKPARNSIIDAAKVWPNIPPPNTQTAPVTVPLCNGCGTKGMGKETTLLLATSLGKAASKFGSPEVALAGQMLENLPPIGVFWDIENCSVPSGRSATAVVQRIREKFFKGHREAEFICVCDISKENKEVIQELNNCQVTVAHINATAKNAADDKLRQSLRRFANTHTAPATVVLVSTDVNFALELSDLRHRHGFHIILVHKNQASEALLHHANELIRFEEFISDLPPRLPLKMPCHTLLYVYNLPANKDGKSISNRLRRLSDNCGGKVLNITGCSAILRFINRDSAERALKRMENEDVFGNRIVVSFTPKSSELCETKSSNATADKVKSPKKLKNPKLCLIKDISESPSSAKAAPGKGSQANSGSATRNANVKSLQELCRLESKTGTRSSEPQQGHLRLGAPPHRSSSAAAPAPKAPGLAESVYKTNPKKESLGARSVTSSPVEKKEKEETLFQVSYPSAFSKLIASRQVSPLLTAQPWSSRNLSPNLLNRASPLAFNAAHSSVGADGPDPFAHGVDVQISNLDYRLSRKELQQLMQEAFSRHGKVKSVELSPHTDYQLKAVVQMENLQEAIGAVNSLHRYKIGSKKILVSLATGAANKSLSLLSAETMSILQDAPACCLPLFKFTDIYEKKFGHRLNVSDLYKLTDTVAIREQGNGRLVCLLPSSQARQSPLGSSQSHDGSSTNCSPIIFEELEYHEPVCRQHCPNKDFSEHEFDPDSYKIPFVILSLKTFAPQVHSLLQTHEGTVPLLSFPDCYAAEFGELEIVQENRGGGVPLEHLITCVPGVNIATAQNGVKVVKWIHNKPPPPNTDPWLLRSKSPVGNPQLIQFSREVIDLLKNQPSCVIPISNFIPSYHHHFAKQCRVSDYGYSKLIELLEAVPHVLQILGMGSKRLLTLTHRAQVKRFTQDLLKLLKSQASKQVIVKEFAQAYHWCFSKDWDVTEYGVCELIDIISEIPDTTICLSQQDSEAMICIPRRERTQDEIERTKQFSKDVVDLLRHQPHFRMPFNKFIPSYHHHFGRQCKLAYYGFTKLLELFEAIPDILQVLECGEEKILTLTEVERFKALAAQFVKLLRSQKDNCLMMTDLLKEYAKTFGYTFRLQDYDVSSVSALTQKLCHVVKVADMESGKQIQLINRKSLRALTAQLLVLLMSWEGTTHLSVDELKRHYESTHSTPLNPCEYGFMTLTELLKSLPYLVEDQVFTNDKTEECVKLTSLYLFAKNVRSLLHTYHYQQLFLHEFSMAYSKYVGETLQPKTYGFSSVEELLGAIPQVVWIKGHGHKRIVVLKNDMKSRVNSLGPSPASHETQPSAPERILEVPESPPASELRLGVGGDGPHPAEQELLRLTDDSPVDLLCAPVPSCLPSPQLRPDPVVLQAADLIWFEEHPQEPSEIMILNQEEKIEIPVPIRNENLPPDPSSPGVSAAVPAPPSPSSETPESLLSKDPTESPAKKQPKNRVKLAANFSFAPITKL.

At serine 65 the chain carries Phosphoserine. In terms of domain architecture, NYN spans 351–488; the sequence is IGVFWDIENC…ALLHHANELI (138 aa). Disordered regions lie at residues 620–642 and 655–721; these read PSSA…TRNA and SKTG…KEKE. Residues 631-642 show a composition bias toward polar residues; the sequence is SQANSGSATRNA. Residues 673 to 689 show a composition bias toward low complexity; it reads APPHRSSSAAAPAPKAP. Position 696 is a phosphotyrosine (tyrosine 696). A Phosphoserine modification is found at serine 757. An RRM domain is found at 788–867; that stretch reads VDVQISNLDY…KKILVSLATG (80 aa). HTH OST-type domains lie at 872-946 and 1000-1077; these read SLSL…SPLG and SLKT…HNKP. Phosphoserine occurs at positions 1089 and 1091. HTH OST-type domains are found at residues 1097 to 1171, 1173 to 1247, 1257 to 1332, 1333 to 1408, 1409 to 1484, and 1486 to 1560; these read QLIQ…LTHR, QVKR…CIPR, RTKQ…TEVE, RFKA…INRK, SLRA…CVKL, and SLYL…LKND. Phosphoserine is present on serine 1571. A disordered region spans residues 1678–1729; the sequence is IRNENLPPDPSSPGVSAAVPAPPSPSSETPESLLSKDPTESPAKKQPKNRVK. The segment covering 1703-1712 has biased composition (low complexity); sequence SSETPESLLS.

Interacts with LIMK2.

Its subcellular location is the peroxisome. Functionally, essential regulator of oogenesis required for female meiotic progression to repress transposable elements and preventing their mobilization, which is essential for the germline integrity. Probably acts via some RNA metabolic process, equivalent to the piRNA system in males, which mediates the repression of transposable elements during meiosis by forming complexes composed of RNAs and governs the methylation and subsequent repression of transposons. Also required to protect from DNA double-strand breaks. The polypeptide is Meiosis regulator and mRNA stability factor 1 (Bos taurus (Bovine)).